The following is a 224-amino-acid chain: ATP synthase subunit b (224 aa).

A helical membrane pass occupies residues 2-22 (TPSLGLIFWQSVIFLISFIIL).

Belongs to the ATPase B chain family. In terms of assembly, F-type ATPases have 2 components, F(1) - the catalytic core - and F(0) - the membrane proton channel. F(1) has five subunits: alpha(3), beta(3), gamma(1), delta(1), epsilon(1). F(0) has three main subunits: a(1), b(2) and c(10-14). The alpha and beta chains form an alternating ring which encloses part of the gamma chain. F(1) is attached to F(0) by a central stalk formed by the gamma and epsilon chains, while a peripheral stalk is formed by the delta and b chains.

It is found in the cell membrane. In terms of biological role, f(1)F(0) ATP synthase produces ATP from ADP in the presence of a proton or sodium gradient. F-type ATPases consist of two structural domains, F(1) containing the extramembraneous catalytic core and F(0) containing the membrane proton channel, linked together by a central stalk and a peripheral stalk. During catalysis, ATP synthesis in the catalytic domain of F(1) is coupled via a rotary mechanism of the central stalk subunits to proton translocation. Component of the F(0) channel, it forms part of the peripheral stalk, linking F(1) to F(0). The sequence is that of ATP synthase subunit b from Karelsulcia muelleri (strain GWSS) (Sulcia muelleri).